We begin with the raw amino-acid sequence, 459 residues long: Ribulose bisphosphate carboxylase large chain (459 aa).

The substrate site is built by N98 and T148. K150 functions as the Proton acceptor in the catalytic mechanism. A substrate-binding site is contributed by K152. Residues K176, D178, and E179 each coordinate Mg(2+). N6-carboxylysine is present on K176. H268 functions as the Proton acceptor in the catalytic mechanism. The substrate site is built by R269, H301, and S353.

Belongs to the RuBisCO large chain family. Type I subfamily. Heterohexadecamer of 8 large chains and 8 small chains. Mg(2+) serves as cofactor.

It is found in the plastid. The protein resides in the chloroplast. It carries out the reaction 2 (2R)-3-phosphoglycerate + 2 H(+) = D-ribulose 1,5-bisphosphate + CO2 + H2O. It catalyses the reaction D-ribulose 1,5-bisphosphate + O2 = 2-phosphoglycolate + (2R)-3-phosphoglycerate + 2 H(+). In terms of biological role, ruBisCO catalyzes two reactions: the carboxylation of D-ribulose 1,5-bisphosphate, the primary event in carbon dioxide fixation, as well as the oxidative fragmentation of the pentose substrate in the photorespiration process. Both reactions occur simultaneously and in competition at the same active site. This is Ribulose bisphosphate carboxylase large chain (rbcL) from Calyptrosphaera sphaeroidea.